Consider the following 60-residue polypeptide: Bowman-Birk type proteinase inhibitor C1 (60 aa).

4 cysteine pairs are disulfide-bonded: C5/C21, C11/C19, C28/C35, and C32/C49.

This sequence belongs to the Bowman-Birk serine protease inhibitor family. As to expression, expressed in bulb (at protein level).

Functionally, serine protease inhibitor. Strongly inhibits trypsin (Ki = 0.22 nM) and very weakly inhibits chymotrypsin (Ki = 1200 nM). Does not inhibit bacterial subtilisin. In Hyacinthus orientalis (Common hyacinth), this protein is Bowman-Birk type proteinase inhibitor C1.